Reading from the N-terminus, the 295-residue chain is 33 kDa chaperonin (295 aa).

2 cysteine pairs are disulfide-bonded: cysteine 238/cysteine 240 and cysteine 271/cysteine 274.

It belongs to the HSP33 family. In terms of processing, under oxidizing conditions two disulfide bonds are formed involving the reactive cysteines. Under reducing conditions zinc is bound to the reactive cysteines and the protein is inactive.

The protein localises to the cytoplasm. In terms of biological role, redox regulated molecular chaperone. Protects both thermally unfolding and oxidatively damaged proteins from irreversible aggregation. Plays an important role in the bacterial defense system toward oxidative stress. The chain is 33 kDa chaperonin from Clostridium botulinum (strain Eklund 17B / Type B).